The primary structure comprises 519 residues: 2-isopropylmalate synthase (519 aa).

The Pyruvate carboxyltransferase domain occupies 5–267 (VIIFDTTLRD…TTNVNPMEIS (263 aa)). Residues aspartate 14, histidine 202, histidine 204, and asparagine 238 each contribute to the Mn(2+) site. The tract at residues 392-519 (RLESINVQSG…KEQLIHIDQV (128 aa)) is regulatory domain.

The protein belongs to the alpha-IPM synthase/homocitrate synthase family. LeuA type 1 subfamily. In terms of assembly, homodimer. Mn(2+) serves as cofactor.

It is found in the cytoplasm. The enzyme catalyses 3-methyl-2-oxobutanoate + acetyl-CoA + H2O = (2S)-2-isopropylmalate + CoA + H(+). It participates in amino-acid biosynthesis; L-leucine biosynthesis; L-leucine from 3-methyl-2-oxobutanoate: step 1/4. Catalyzes the condensation of the acetyl group of acetyl-CoA with 3-methyl-2-oxobutanoate (2-ketoisovalerate) to form 3-carboxy-3-hydroxy-4-methylpentanoate (2-isopropylmalate). The polypeptide is 2-isopropylmalate synthase (Psychromonas ingrahamii (strain DSM 17664 / CCUG 51855 / 37)).